A 145-amino-acid polypeptide reads, in one-letter code: Late embryogenesis abundant protein D-11 (145 aa).

The segment covering methionine 1–alanine 18 has biased composition (polar residues). The interval methionine 1 to isoleucine 136 is disordered. Residues glycine 47–histidine 57 show a composition bias toward basic residues. Positions arginine 58–serine 68 are enriched in low complexity. The segment covering lysine 82–glutamine 96 has biased composition (basic and acidic residues). Polar residues predominate over residues serine 97–glutamine 107.

This sequence belongs to the plant dehydrin family.

Functionally, LEA protein are late embryogenesis abundant in higher plant seed embryos. There are two subsets of LEA proteins (5a, and 5b), the first ones are expressed when the cotyledon weight reach 80 mg and the second set are expressed above 100 mg. The function of those proteins is not known. This Gossypium hirsutum (Upland cotton) protein is Late embryogenesis abundant protein D-11.